A 120-amino-acid chain; its full sequence is MDYEFLRDITGVVKVRMSMGHEVVGHWFNEEVKENLALLDEVEQAAHALKGSERSWQRAGHEYTLWMDAEEVMVRANQLEFAGDEMEEGMNYYDEESLSLCGVEDFLQVVAAYRNFVQQK.

Belongs to the UPF0231 family.

In Shigella flexneri, this protein is UPF0231 protein YacL (yacL).